Consider the following 171-residue polypeptide: PIDD1 alternative open reading frame protein (171 aa).

Disordered stretches follow at residues 1–22 (MSGLQGPSVGDGCNGGGARAGG) and 76–156 (ILAS…LCPA). A compositionally biased stretch (low complexity) spans 84-99 (GPSAAGGHPGPAASEP).

As to quaternary structure, interacts with calpain-2 catalytic subunit CAPN2. Cleaved in vitro following UV irradiation to induce caspase-mediated apoptosis and this cleavage is inhibited by a broad-spectrum caspase inhibitor.

Its subcellular location is the cytoplasm. The protein localises to the cytoskeleton. The sequence is that of PIDD1 alternative open reading frame protein from Homo sapiens (Human).